The following is a 786-amino-acid chain: Signal transducer and activator of transcription 5B (786 aa).

Tyr90 carries the post-translational modification Phosphotyrosine. At Ser128 the chain carries Phosphoserine. In terms of domain architecture, SH2 spans 589–686 (WNDGAILGFV…EVYSKYYTPV (98 aa)). Phosphotyrosine is present on residues Tyr682 and Tyr699.

This sequence belongs to the transcription factor STAT family. Upon activation, forms a homodimer or a heterodimer with a related family member. Binds NR3C1. Interacts with NCOA1. Interacts with NMI. Interacts with SOCS7. Interacts (via SH2 domain) with INSR. Interacts with CPEB3; this inhibits STAT5B-mediated transcriptional activation. In terms of processing, tyrosine phosphorylated in response to signaling via activated KIT, resulting in translocation to the nucleus. Tyrosine phosphorylated in response to signaling via activated FLT3; wild-type FLT3 results in much weaker phosphorylation than constitutively activated mutant FLT3. Alternatively, can be phosphorylated by JAK2. Phosphorylation at Tyr-699 by PTK6 or HCK leads to an increase of its transcriptional activity.

It localises to the cytoplasm. The protein localises to the nucleus. Functionally, carries out a dual function: signal transduction and activation of transcription. Mediates cellular responses to the cytokine KITLG/SCF and other growth factors. Binds to the GAS element and activates PRL-induced transcription. Positively regulates hematopoietic/erythroid differentiation. In Rattus norvegicus (Rat), this protein is Signal transducer and activator of transcription 5B (Stat5b).